Consider the following 206-residue polypeptide: LexA repressor (206 aa).

Positions 28–48 (RAEIARELGFRSANAAEEHLK) form a DNA-binding region, H-T-H motif. Residues S123 and K160 each act as for autocatalytic cleavage activity in the active site.

The protein belongs to the peptidase S24 family. As to quaternary structure, homodimer.

The enzyme catalyses Hydrolysis of Ala-|-Gly bond in repressor LexA.. Represses a number of genes involved in the response to DNA damage (SOS response), including recA and lexA. In the presence of single-stranded DNA, RecA interacts with LexA causing an autocatalytic cleavage which disrupts the DNA-binding part of LexA, leading to derepression of the SOS regulon and eventually DNA repair. The chain is LexA repressor from Vibrio campbellii (strain ATCC BAA-1116).